Reading from the N-terminus, the 666-residue chain is Probable cytochrome c oxidase subunit 1 (666 aa).

The next 2 membrane-spanning stretches (helical) occupy residues Ile-16–Val-36 and Ile-57–Ile-77. His-105 contacts heme b. A run of 13 helical transmembrane segments spans residues Ile-108 to Leu-128, Ser-142 to Gly-162, Ser-192 to Leu-212, Ser-234 to Leu-254, Leu-277 to Phe-297, Met-315 to Phe-335, Ile-346 to Leu-366, Met-380 to Val-400, Met-413 to Ala-433, Phe-456 to Leu-476, Trp-493 to Met-513, Ser-591 to His-611, and Ile-612 to Trp-632. Cu cation is bound by residues His-283, Tyr-287, His-332, and His-333. Residues His-283–Tyr-287 constitute a cross-link (1'-histidyl-3'-tyrosine (His-Tyr)). Heme b-binding residues include His-418 and His-420.

Belongs to the heme-copper respiratory oxidase family.

Its subcellular location is the cell membrane. It carries out the reaction 4 Fe(II)-[cytochrome c] + O2 + 8 H(+)(in) = 4 Fe(III)-[cytochrome c] + 2 H2O + 4 H(+)(out). It functions in the pathway energy metabolism; oxidative phosphorylation. The polypeptide is Probable cytochrome c oxidase subunit 1 (Bradyrhizobium diazoefficiens (strain JCM 10833 / BCRC 13528 / IAM 13628 / NBRC 14792 / USDA 110)).